Reading from the N-terminus, the 189-residue chain is Interferon alpha-4 (189 aa).

The first 23 residues, 1–23 (MALSFSLLMAVLVLSYKSICSLG), serve as a signal peptide directing secretion. 2 cysteine pairs are disulfide-bonded: C24-C122 and C52-C162.

The protein belongs to the alpha/beta interferon family.

The protein resides in the secreted. Produced by macrophages, IFN-alpha have antiviral activities. Interferon stimulates the production of two enzymes: a protein kinase and an oligoadenylate synthetase. The protein is Interferon alpha-4 (IFNA4) of Homo sapiens (Human).